The primary structure comprises 1059 residues: IQ motif-containing protein H (1059 aa).

The stretch at 6–35 (KNKDEVGNILVKVQDDLRQLKKNIVQFTVQ) forms a coiled coil. The tract at residues 245–267 (MESAESRLLRAPPPSAASASSDN) is disordered. Positions 401 to 430 (HQAAAVRIQTCWRRYSARTAYLIRLRSKWA) constitute an IQ domain.

This is IQ motif-containing protein H (iqch) from Danio rerio (Zebrafish).